Here is a 117-residue protein sequence, read N- to C-terminus: MNVIDELEREQIETCKHTVPEFAPGDTVLVQVWVREGGRERVQPFEGVVIAKRKRGLNSSFTLRKTSHGEGVERVFQTYSPQIESIKVKRRGDVRQAKLYHLRELSGKAARIKEKIN.

This sequence belongs to the bacterial ribosomal protein bL19 family.

Its function is as follows. This protein is located at the 30S-50S ribosomal subunit interface and may play a role in the structure and function of the aminoacyl-tRNA binding site. This Halorhodospira halophila (strain DSM 244 / SL1) (Ectothiorhodospira halophila (strain DSM 244 / SL1)) protein is Large ribosomal subunit protein bL19.